The sequence spans 241 residues: Probable transcriptional regulator PhnF (241 aa).

The HTH gntR-type domain occupies 11–78 (PTRYQEIAAK…QGVGVLVLMR (68 aa)). A DNA-binding region (H-T-H motif) is located at residues 38–57 (EQQLAARFEVNRHTLRRAID).

Belongs to an operon involved in alkylphosphonate uptake and C-P lyase. Exact function not known. By similarity could be a transcriptional regulator. The polypeptide is Probable transcriptional regulator PhnF (phnF) (Escherichia coli (strain K12)).